The sequence spans 208 residues: N-(5'-phosphoribosyl)anthranilate isomerase (208 aa).

Belongs to the TrpF family.

The catalysed reaction is N-(5-phospho-beta-D-ribosyl)anthranilate = 1-(2-carboxyphenylamino)-1-deoxy-D-ribulose 5-phosphate. The protein operates within amino-acid biosynthesis; L-tryptophan biosynthesis; L-tryptophan from chorismate: step 3/5. The sequence is that of N-(5'-phosphoribosyl)anthranilate isomerase from Pyrococcus furiosus (strain ATCC 43587 / DSM 3638 / JCM 8422 / Vc1).